The primary structure comprises 388 residues: Formate-dependent phosphoribosylglycinamide formyltransferase (388 aa).

Residues 20 to 21 (EL) and Glu-80 contribute to the N(1)-(5-phospho-beta-D-ribosyl)glycinamide site. Residues Arg-112, Lys-153, 158–163 (SSGKGQ), 193–196 (EEFI), and Glu-201 contribute to the ATP site. The region spanning 117–306 (RLAFEKLGLR…EFEIHARAIL (190 aa)) is the ATP-grasp domain. 2 residues coordinate Mg(2+): Glu-265 and Glu-277. N(1)-(5-phospho-beta-D-ribosyl)glycinamide contacts are provided by residues Asp-284, Lys-352, and 359–360 (RR).

It belongs to the PurK/PurT family. In terms of assembly, homodimer.

The catalysed reaction is N(1)-(5-phospho-beta-D-ribosyl)glycinamide + formate + ATP = N(2)-formyl-N(1)-(5-phospho-beta-D-ribosyl)glycinamide + ADP + phosphate + H(+). Its pathway is purine metabolism; IMP biosynthesis via de novo pathway; N(2)-formyl-N(1)-(5-phospho-D-ribosyl)glycinamide from N(1)-(5-phospho-D-ribosyl)glycinamide (formate route): step 1/1. Involved in the de novo purine biosynthesis. Catalyzes the transfer of formate to 5-phospho-ribosyl-glycinamide (GAR), producing 5-phospho-ribosyl-N-formylglycinamide (FGAR). Formate is provided by PurU via hydrolysis of 10-formyl-tetrahydrofolate. The protein is Formate-dependent phosphoribosylglycinamide formyltransferase of Methanococcus maripaludis (strain DSM 14266 / JCM 13030 / NBRC 101832 / S2 / LL).